We begin with the raw amino-acid sequence, 186 residues long: Low amplitude and bright protein LabA (186 aa).

Functionally, functions in an output pathway of the circadian clock. One of three clock output pathways. Involved in negative feedback regulation of KaiC; deletion leads to overexpression of KaiC protein and decreases the amplitude of the circadian response. Overexpression reduces the expression of circadian genes. The sequence is that of Low amplitude and bright protein LabA from Synechococcus elongatus (strain ATCC 33912 / PCC 7942 / FACHB-805) (Anacystis nidulans R2).